Here is a 260-residue protein sequence, read N- to C-terminus: GDNF family receptor alpha-4 (260 aa).

An N-terminal signal peptide occupies residues 1 to 23; it reads MAHCMESALLLLLLLGSASFTDG. An N-linked (GlcNAc...) asparagine glycan is attached at Asn-184. A lipid anchor (GPI-anchor amidated threonine) is attached at Thr-237. The propeptide at 238 to 260 is removed in mature form; sequence AGCCFPRVSWLYALTALALQALL.

The protein belongs to the GDNFR family. In terms of assembly, interacts with ARTN ligand and RET: forms a 2:2:2 ternary complex composed of ARTN ligand, GFRA3 and RET receptor. Interacts with SORL1. In terms of tissue distribution, expressed in many tissues including adrenal medulla, brain neurons, with highest levels in the cerebral cortex and hippocampus. Moderate levels found in the gut circular muscle and myenteric ganglia as well as in other peripheral ganglia, including the sensory dorsal root and trigeminal as well as superior cervical and sympathetic chain ganglia. Isoform a1, isoform a2, isoform b1 and isoform b2 are exclusively found in the thyroid, parthyroid and pituitary glands.

The protein localises to the cell membrane. Its subcellular location is the secreted. Functionally, receptor for persephin (PSPN), a growth factor that exhibits neurotrophic activity on mesencephalic dopaminergic and motor neurons. Acts by binding to its coreceptor, GFRA4, leading to autophosphorylation and activation of the RET receptor. May be important in C-cell development and, in the postnatal development of the adrenal medulla. The protein is GDNF family receptor alpha-4 (Gfra4) of Mus musculus (Mouse).